The chain runs to 162 residues: Anaerobic nitrite reductase (162 aa).

An N-acetylserine modification is found at Ser2. One can recognise a Globin domain in the interval 9–158 (VFTEEQEALV…LVAAIKFEMK (150 aa)). Positions 42 to 46 (EIAPS) match the Homodimerization motif. Residues Ser52, Lys66, His70, Arg100, and His105 each coordinate heme b. Residues 112-124 (NEHFEVTRFALLE) carry the Homodimerization motif.

Belongs to the plant globin family. Homodimer with distinct heme coordination in each subunits. Requires heme b as cofactor. In terms of tissue distribution, root nodules.

Its subcellular location is the cytoplasm. The protein localises to the nucleus. It catalyses the reaction Fe(III)-heme b-[protein] + nitric oxide + H2O = Fe(II)-heme b-[protein] + nitrite + 2 H(+). Phytoglobin that reduces nitrite to nitric oxide (NO) under anoxic conditions (e.g. during flooding or in waterlogged soil) and upon root nodulation. Required for general plant development and during nodulation, especially for the onset of symbiosis. Monitors nitric oxide (NO) levels during early phase of the nitrogen-fixing symbiosis and buffers oxygen in functioning nodules. May not function as an oxygen storage or transport protein. Has an unusually high affinity for O(2) through a hexacoordinate heme iron because of a very low dissociation constant. This Parasponia andersonii (Sponia andersonii) protein is Anaerobic nitrite reductase.